We begin with the raw amino-acid sequence, 517 residues long: Crotonobetaine/carnitine--CoA ligase (517 aa).

It belongs to the ATP-dependent AMP-binding enzyme family.

The enzyme catalyses 4-(trimethylamino)butanoate + ATP + CoA = 4-(trimethylamino)butanoyl-CoA + AMP + diphosphate. The catalysed reaction is crotonobetaine + ATP + CoA = crotonobetainyl-CoA + AMP + diphosphate. It catalyses the reaction (R)-carnitine + ATP + CoA = (R)-carnitinyl-CoA + AMP + diphosphate. The protein operates within amine and polyamine metabolism; carnitine metabolism. Catalyzes the transfer of CoA to carnitine, generating the initial carnitinyl-CoA needed for the CaiB reaction cycle. Also has activity toward crotonobetaine and gamma-butyrobetaine. The chain is Crotonobetaine/carnitine--CoA ligase from Shigella flexneri.